A 178-amino-acid chain; its full sequence is Neuroblastoma suppressor of tumorigenicity 1 (178 aa).

Residues 1 to 16 (MLWVLVGAVLPVMLLA) form the signal peptide. 5 disulfides stabilise this stretch: C34–C84, C48–C98, C58–C117, C62–C119, and C81–C122. The CTCK domain maps to 34–123 (CEAKNITQIV…IVHCSCQACG (90 aa)). A disordered region spans residues 132-178 (NVYVQGEDSPGSQPGPHSHAHPHPGGQTPEPEEPPGAPQVEEEGAED). The segment covering 140-160 (SPGSQPGPHSHAHPHPGGQTP) has biased composition (low complexity).

This sequence belongs to the DAN family. In terms of assembly, homodimer.

The protein resides in the secreted. Functionally, possible candidate as a tumor suppressor gene of neuroblastoma. May play an important role in preventing cells from entering the final stage (G1/S) of the transformation process. The sequence is that of Neuroblastoma suppressor of tumorigenicity 1 (Nbl1) from Mus musculus (Mouse).